A 193-amino-acid polypeptide reads, in one-letter code: Rho-related protein racB (193 aa).

The GTP site is built by alanine 13, glycine 15, lysine 16, threonine 17, cysteine 18, tyrosine 32, threonine 35, glycine 60, lysine 116, aspartate 118, and alanine 159. Residue threonine 17 participates in Mg(2+) binding. Short sequence motifs (switch) lie at residues 26–37 (NAFPTEYVPTVF) and 57–75 (DTAG…YPQT). Residue threonine 35 participates in Mg(2+) binding. Cysteine 190 is subject to Cysteine methyl ester. Cysteine 190 carries S-geranylgeranyl cysteine lipidation. Positions 191 to 193 (LIF) are cleaved as a propeptide — removed in mature form.

This sequence belongs to the small GTPase superfamily. Rho family. Mg(2+) serves as cofactor.

The protein resides in the cell membrane. The protein localises to the cytoplasm. It localises to the cytoskeleton. It catalyses the reaction GTP + H2O = GDP + phosphate + H(+). With respect to regulation, regulated by guanine nucleotide exchange factors (GEFs) which promote the exchange of bound GDP for free GTP, GTPase activating proteins (GAPs) which increase the GTP hydrolysis activity, and GDP dissociation inhibitors which inhibit the dissociation of the nucleotide from the GTPase. Functionally, small GTPase which cycles between active GTP-bound and inactive GDP-bound states. The protein is Rho-related protein racB of Entamoeba histolytica (strain ATCC 30459 / HM-1:IMSS / ABRM).